The sequence spans 805 residues: Rho GTPase-activating protein 42 (805 aa).

In terms of domain architecture, BAR spans 7–262 (EFSDSFLDSP…IRSAEQDFKA (256 aa)). Positions 225–262 (KQQLQFNLQNTRNNFESTRQEVENLMRRIRSAEQDFKA) form a coiled coil. A PH domain is found at 265 to 374 (QWTMEGFLYV…WMEAMDGKEP (110 aa)). The region spanning 376-572 (YTLPALLSKK…ILIENYDKIF (197 aa)) is the Rho-GAP domain. 3 disordered regions span residues 576 to 600 (PDPN…RSKA), 625 to 725 (SDTF…SELL), and 765 to 805 (VSRS…PGSV). Residues 626–654 (DTFSSSPSSTPMGSMESLSSHSSEQNSCS) are compositionally biased toward low complexity. Residues 670–693 (LCWTTPSPSTNGPKSPACTTSPDS) are compositionally biased toward polar residues. A compositionally biased stretch (basic and acidic residues) spans 694–704 (SSKEDANKTDG). Residues 710–721 (LSTSPGDRSSPA) show a composition bias toward polar residues. Residues 782 to 793 (PPKDGMRFRDDS) show a composition bias toward basic and acidic residues.

In terms of biological role, may influence blood pressure by functioning as a GTPase-activating protein in vascular smooth muscle. The sequence is that of Rho GTPase-activating protein 42 from Danio rerio (Zebrafish).